A 145-amino-acid polypeptide reads, in one-letter code: 3-hydroxyacyl-[acyl-carrier-protein] dehydratase FabZ (145 aa).

His51 is a catalytic residue.

This sequence belongs to the thioester dehydratase family. FabZ subfamily.

The protein resides in the cytoplasm. The catalysed reaction is a (3R)-hydroxyacyl-[ACP] = a (2E)-enoyl-[ACP] + H2O. Its function is as follows. Involved in unsaturated fatty acids biosynthesis. Catalyzes the dehydration of short chain beta-hydroxyacyl-ACPs and long chain saturated and unsaturated beta-hydroxyacyl-ACPs. This is 3-hydroxyacyl-[acyl-carrier-protein] dehydratase FabZ from Staphylococcus epidermidis (strain ATCC 35984 / DSM 28319 / BCRC 17069 / CCUG 31568 / BM 3577 / RP62A).